A 119-amino-acid chain; its full sequence is Large ribosomal subunit protein uL22 (119 aa).

The protein belongs to the universal ribosomal protein uL22 family. As to quaternary structure, part of the 50S ribosomal subunit.

This protein binds specifically to 23S rRNA; its binding is stimulated by other ribosomal proteins, e.g. L4, L17, and L20. It is important during the early stages of 50S assembly. It makes multiple contacts with different domains of the 23S rRNA in the assembled 50S subunit and ribosome. Its function is as follows. The globular domain of the protein is located near the polypeptide exit tunnel on the outside of the subunit, while an extended beta-hairpin is found that lines the wall of the exit tunnel in the center of the 70S ribosome. This chain is Large ribosomal subunit protein uL22, found in Rickettsia bellii (strain OSU 85-389).